Consider the following 97-residue polypeptide: Type 1 phosphatases regulator YPI2 (97 aa).

The interval 1-97 (MNKKKTKICC…KMMEKKSNNT (97 aa)) is disordered. Positions 43–53 (ENDKDLGFDER) are enriched in basic and acidic residues. The span at 54-65 (RKRRVERRRRKL) shows a compositional bias: basic residues.

The protein belongs to the YPI1 family.

The protein localises to the nucleus. Functionally, regulator of type 1 phosphatases which maintains protein phosphatase activity under strict control. The chain is Type 1 phosphatases regulator YPI2 (YPI2) from Vanderwaltozyma polyspora (strain ATCC 22028 / DSM 70294 / BCRC 21397 / CBS 2163 / NBRC 10782 / NRRL Y-8283 / UCD 57-17) (Kluyveromyces polysporus).